Here is a 154-residue protein sequence, read N- to C-terminus: Myoglobin (154 aa).

Residues 2–148 (GLSDQEWQQV…FRNDMASKYK (147 aa)) form the Globin domain. Position 65 (histidine 65) interacts with nitrite. Histidine 65 lines the O2 pocket. Residue histidine 94 participates in heme b binding.

The protein belongs to the globin family. Monomeric.

Its subcellular location is the cytoplasm. It is found in the sarcoplasm. The catalysed reaction is Fe(III)-heme b-[protein] + nitric oxide + H2O = Fe(II)-heme b-[protein] + nitrite + 2 H(+). It carries out the reaction H2O2 + AH2 = A + 2 H2O. Functionally, monomeric heme protein which primary function is to store oxygen and facilitate its diffusion within muscle tissues. Reversibly binds oxygen through a pentacoordinated heme iron and enables its timely and efficient release as needed during periods of heightened demand. Depending on the oxidative conditions of tissues and cells, and in addition to its ability to bind oxygen, it also has a nitrite reductase activity whereby it regulates the production of bioactive nitric oxide. Under stress conditions, like hypoxia and anoxia, it also protects cells against reactive oxygen species thanks to its pseudoperoxidase activity. In Cerorhinca monocerata (Rhinoceros auklet), this protein is Myoglobin (MB).